The primary structure comprises 450 residues: Tripartite motif-containing protein 77 (450 aa).

The segment at 15–56 adopts an RING-type zinc-finger fold; the sequence is CSICTDYLTDPVTICCGHRFCSPCLCLLWEDTLTPNCCPVCR. A B box-type zinc finger spans residues 88–131; it reads SAMLICRRHQEIKNLICETDRSLLCFLCSQSPRHATHKHYMTRE. Residues cysteine 93, histidine 96, cysteine 115, and histidine 121 each coordinate Zn(2+). One can recognise a B30.2/SPRY domain in the interval 269–450; sequence QLSAWTITGV…LRPFICHGSK (182 aa).

This sequence belongs to the TRIM/RBCC family.

This Homo sapiens (Human) protein is Tripartite motif-containing protein 77 (TRIM77).